The sequence spans 400 residues: Bifunctional enzyme IspD/IspF (400 aa).

A 2-C-methyl-D-erythritol 4-phosphate cytidylyltransferase region spans residues 1-235 (MSLWTVLLAA…LAEAAAPPVP (235 aa)). Residues 236–400 (VTGYGYDVHR…VALVSGWRRP (165 aa)) are 2-C-methyl-D-erythritol 2,4-cyclodiphosphate synthase. Residues aspartate 242 and histidine 244 each coordinate a divalent metal cation. 4-CDP-2-C-methyl-D-erythritol 2-phosphate is bound by residues 242-244 (DVH) and 276-277 (HS). Histidine 284 provides a ligand contact to a divalent metal cation. Residues 298–300 (DIG), 303–307 (FPDSN), 374–377 (TTEE), and phenylalanine 381 each bind 4-CDP-2-C-methyl-D-erythritol 2-phosphate.

The protein in the N-terminal section; belongs to the IspD/TarI cytidylyltransferase family. IspD subfamily. This sequence in the C-terminal section; belongs to the IspF family. The cofactor is a divalent metal cation.

It carries out the reaction 2-C-methyl-D-erythritol 4-phosphate + CTP + H(+) = 4-CDP-2-C-methyl-D-erythritol + diphosphate. The enzyme catalyses 4-CDP-2-C-methyl-D-erythritol 2-phosphate = 2-C-methyl-D-erythritol 2,4-cyclic diphosphate + CMP. The protein operates within isoprenoid biosynthesis; isopentenyl diphosphate biosynthesis via DXP pathway; isopentenyl diphosphate from 1-deoxy-D-xylulose 5-phosphate: step 2/6. It functions in the pathway isoprenoid biosynthesis; isopentenyl diphosphate biosynthesis via DXP pathway; isopentenyl diphosphate from 1-deoxy-D-xylulose 5-phosphate: step 4/6. Functionally, bifunctional enzyme that catalyzes the formation of 4-diphosphocytidyl-2-C-methyl-D-erythritol from CTP and 2-C-methyl-D-erythritol 4-phosphate (MEP) (IspD), and catalyzes the conversion of 4-diphosphocytidyl-2-C-methyl-D-erythritol 2-phosphate (CDP-ME2P) to 2-C-methyl-D-erythritol 2,4-cyclodiphosphate (ME-CPP) with a corresponding release of cytidine 5-monophosphate (CMP) (IspF). The sequence is that of Bifunctional enzyme IspD/IspF from Solidesulfovibrio magneticus (strain ATCC 700980 / DSM 13731 / RS-1) (Desulfovibrio magneticus).